Here is an 822-residue protein sequence, read N- to C-terminus: Molybdenum cofactor sulfurase (822 aa).

K245 bears the N6-(pyridoxal phosphate)lysine mark. C412 is an active-site residue. The MOSC domain maps to 658–814; that stretch reads LRLIRQSSND…LKTYSPIKAI (157 aa).

The protein belongs to the class-V pyridoxal-phosphate-dependent aminotransferase family. MOCOS subfamily. Requires pyridoxal 5'-phosphate as cofactor.

It carries out the reaction Mo-molybdopterin + L-cysteine + AH2 = thio-Mo-molybdopterin + L-alanine + A + H2O. Its pathway is cofactor biosynthesis; molybdopterin biosynthesis. Sulfurates the molybdenum cofactor. Sulfation of molybdenum is essential for xanthine dehydrogenase (XDH) and aldehyde oxidase (ADO) enzymes in which molybdenum cofactor is liganded by 1 oxygen and 1 sulfur atom in active form. The chain is Molybdenum cofactor sulfurase from Bombyx mori (Silk moth).